The sequence spans 212 residues: Cyclin-dependent kinase inhibitor 3 (212 aa).

Polar residues predominate over residues 1 to 12 (MKPPSSIQTSEF). The disordered stretch occupies residues 1-20 (MKPPSSIQTSEFDSSDEEPI). The segment at 1–34 (MKPPSSIQTSEFDSSDEEPIEDEQTPIHISWLSL) is interaction with CDK2. One can recognise a Tyrosine-protein phosphatase domain in the interval 33–201 (SLSRVNCSQF…FRDKLAAHLS (169 aa)). Cys140 serves as the catalytic Phosphocysteine intermediate.

Belongs to the protein-tyrosine phosphatase family. As to quaternary structure, interacts with cyclin-dependent kinases such as CDK1, CDK2 and CDK3. Does not interact with CDK4. Interacts (via C-terminus) with phosphorylated CDK2 (via C-terminal helix). Interacts with MS4A3 (via C-terminus); the interaction enhances CDKN3 enzymatic activity.

It is found in the cytoplasm. Its subcellular location is the perinuclear region. The catalysed reaction is O-phospho-L-tyrosyl-[protein] + H2O = L-tyrosyl-[protein] + phosphate. It catalyses the reaction O-phospho-L-threonyl-[protein] + H2O = L-threonyl-[protein] + phosphate. It carries out the reaction O-phospho-L-seryl-[protein] + H2O = L-seryl-[protein] + phosphate. Its function is as follows. May play a role in cell cycle regulation. Dual specificity CC phosphatase active toward substrates containing either phosphotyrosine or phosphoserine residues. Dephosphorylates CDK2 at 'Thr-160' in a cyclin-dependent manner. This chain is Cyclin-dependent kinase inhibitor 3, found in Homo sapiens (Human).